A 164-amino-acid chain; its full sequence is uncharacterized protein (164 aa).

CBS domains are found at residues 9-66 (ATTK…DIDS) and 72-128 (MTKD…VHTM).

This is an uncharacterized protein from Acidianus ambivalens (Desulfurolobus ambivalens).